Here is a 354-residue protein sequence, read N- to C-terminus: Methylthioribose-1-phosphate isomerase (354 aa).

The Proton donor role is filled by D246.

This sequence belongs to the eIF-2B alpha/beta/delta subunits family. MtnA subfamily.

The protein resides in the cytoplasm. It localises to the nucleus. It catalyses the reaction 5-(methylsulfanyl)-alpha-D-ribose 1-phosphate = 5-(methylsulfanyl)-D-ribulose 1-phosphate. It functions in the pathway amino-acid biosynthesis; L-methionine biosynthesis via salvage pathway; L-methionine from S-methyl-5-thio-alpha-D-ribose 1-phosphate: step 1/6. Catalyzes the interconversion of methylthioribose-1-phosphate (MTR-1-P) into methylthioribulose-1-phosphate (MTRu-1-P). The chain is Methylthioribose-1-phosphate isomerase (mri1) from Xenopus tropicalis (Western clawed frog).